Consider the following 156-residue polypeptide: Ribosomal RNA large subunit methyltransferase H (156 aa).

Residues Leu73, Gly104, and 123–128 (ISSMTL) contribute to the S-adenosyl-L-methionine site.

The protein belongs to the RNA methyltransferase RlmH family. As to quaternary structure, homodimer.

It is found in the cytoplasm. The enzyme catalyses pseudouridine(1915) in 23S rRNA + S-adenosyl-L-methionine = N(3)-methylpseudouridine(1915) in 23S rRNA + S-adenosyl-L-homocysteine + H(+). In terms of biological role, specifically methylates the pseudouridine at position 1915 (m3Psi1915) in 23S rRNA. This is Ribosomal RNA large subunit methyltransferase H from Burkholderia cenocepacia (strain HI2424).